A 336-amino-acid polypeptide reads, in one-letter code: MEKLFIPKGYKPLLSLRETEVAIKELKDFFEDSLAKNLNLTRVSAPLFVNKGSGLNDDLNGIERPVSFDMKAMPEFNIQIVHSLAKWKRLALHRYEFEHGEGLYTDMNAIRRDEDLDNIHSIYVDQWDWEKIIDKEERNLETLKETVRSIYGTFKATEDFIVAKYPHIEKILPEDITFITSQELEDRYPDLTSKERETAICKEFGAVFIIGIGGKLASGEKHDDRSPDYDDWTLNGDLLFYYPLFDEAVELSSMGIRVDEESLLKQLKIAECEERKELPFHQMLLEGKLPYTIGGGIGQSRICMFFLRKAHIGEVQASMWDEDMIRTCEENNIHLL.

Belongs to the class-II aminoacyl-tRNA synthetase family. AsnA subfamily.

It is found in the cytoplasm. It carries out the reaction L-aspartate + NH4(+) + ATP = L-asparagine + AMP + diphosphate + H(+). The protein operates within amino-acid biosynthesis; L-asparagine biosynthesis; L-asparagine from L-aspartate (ammonia route): step 1/1. This Clostridium perfringens (strain ATCC 13124 / DSM 756 / JCM 1290 / NCIMB 6125 / NCTC 8237 / Type A) protein is Aspartate--ammonia ligase.